The following is a 308-amino-acid chain: Probable D,D-dipeptide transport ATP-binding protein DdpF (308 aa).

An ABC transporter domain is found at 8 to 243; sequence LRDVHINFPA…PAHPYTRLLL (236 aa). 49-56 lines the ATP pocket; the sequence is GESGCGKS.

This sequence belongs to the ABC transporter superfamily. The complex is composed of two ATP-binding proteins (DdpD and DdpF), two transmembrane proteins (DdpB and DdpC) and a solute-binding protein (DdpA).

The protein localises to the cell inner membrane. Functionally, part of the ABC transporter complex DdpABCDF, which is probably involved in D,D-dipeptide transport. Probably responsible for energy coupling to the transport system. This Escherichia coli (strain K12) protein is Probable D,D-dipeptide transport ATP-binding protein DdpF.